Here is a 397-residue protein sequence, read N- to C-terminus: tRNA (guanine-N(7)-)-methyltransferase non-catalytic subunit wuho (397 aa).

4 WD repeats span residues 75–115, 163–202, 206–244, and 303–343; these read KVEV…AQLL, GHLS…DIHS, GHKE…ELLL, and AGTW…RASG.

This sequence belongs to the WD repeat TRM82 family. Forms a heterodimer with the catalytic subunit Mettl1. Interacts with mei-P26 and weakly interacts with bgcn; required for the function or formation of the mei-P26-bgcn-bam-sxl complex. Interacts with nanos; may be involved in mei-P26-dependent derepression of the BMP signaling pathway. Interacts with Myc; the interaction may be mediated by mei-P26 and may be involved in the regulation of ribosome biogenesis. As to expression, in testis, it is present at high level in hub cells, a niche for germline stem cells of testis. Ubiquitously expressed in all testicular cells throughout spermatogenesis. Ubiquitously expressed in all germline and somatic cells of the ovary.

It is found in the nucleus. The protein localises to the cytoplasm. The protein operates within tRNA modification; N(7)-methylguanine-tRNA biosynthesis. Required for the Mettl1-dependent formation of N(7)-methylguanine at position 46 (m7G46) in tRNA. In the Mettl1-wuho methyltransferase complex, it is required to stabilize and induce conformational changes of the catalytic subunit. Required for binding of nanos mRNA and repression of translation by the mei-P26-bgcn-bam-sxl complex. May cooperate with mei-P26 and nanos to derepress the BMP signaling pathway. May cooperate with mei-P26 to suppress expression of a subset of microRNAs. May cooperate with mei-P26 to regulate bam expression levels in germline cells during gametogenesis. Required to promote mitosis to meiosis transition during gametogenesis. May regulate germline cell division in part by regulating ribosome biogenesis. This is tRNA (guanine-N(7)-)-methyltransferase non-catalytic subunit wuho from Drosophila persimilis (Fruit fly).